We begin with the raw amino-acid sequence, 137 residues long: Holo-[acyl-carrier-protein] synthase (137 aa).

The Mg(2+) site is built by aspartate 8 and glutamate 57.

It belongs to the P-Pant transferase superfamily. AcpS family. Mg(2+) serves as cofactor.

Its subcellular location is the cytoplasm. It carries out the reaction apo-[ACP] + CoA = holo-[ACP] + adenosine 3',5'-bisphosphate + H(+). Functionally, transfers the 4'-phosphopantetheine moiety from coenzyme A to a Ser of acyl-carrier-protein. This is Holo-[acyl-carrier-protein] synthase from Mesorhizobium japonicum (strain LMG 29417 / CECT 9101 / MAFF 303099) (Mesorhizobium loti (strain MAFF 303099)).